The sequence spans 191 residues: UPF0312 protein SO_3370 (191 aa).

The first 22 residues, 1-22, serve as a signal peptide directing secretion; sequence MKKQLFSALIGASLFAPMAVSA.

Belongs to the UPF0312 family. Type 1 subfamily.

The protein localises to the periplasm. The sequence is that of UPF0312 protein SO_3370 from Shewanella oneidensis (strain ATCC 700550 / JCM 31522 / CIP 106686 / LMG 19005 / NCIMB 14063 / MR-1).